The primary structure comprises 287 residues: MAEITAALVKELRERTGEGMMDCKKALTKAGGDIEKAIDDMRASGAIKAAKKAGNVAAEGAIALKEDGKSAVLLEVNSQTDFLALQDDFKAFVAASVEKAFADKLTDAAPLIEAQEADRLVLVGKVGENVNIRRLVRVEGDVVGGYLHGNKIGVAVVLKGGNVELAKDIAMHVAASNPEFLLPSEVSADAIEREKAVFLSLNADKIAGKPENIVENMIKGRISKFLAEASLVEQAFVKNPEIKVGELAKKAGAEIVSFTYFKVGEGIEKPVDNFAEEVAAQLAAAKQ.

The involved in Mg(2+) ion dislocation from EF-Tu stretch occupies residues 80-83 (TDFL).

This sequence belongs to the EF-Ts family.

It localises to the cytoplasm. Associates with the EF-Tu.GDP complex and induces the exchange of GDP to GTP. It remains bound to the aminoacyl-tRNA.EF-Tu.GTP complex up to the GTP hydrolysis stage on the ribosome. The polypeptide is Elongation factor Ts (Pseudomonas fluorescens (strain SBW25)).